We begin with the raw amino-acid sequence, 119 residues long: UPF0342 protein GTNG_0551 (119 aa).

This sequence belongs to the UPF0342 family.

In Geobacillus thermodenitrificans (strain NG80-2), this protein is UPF0342 protein GTNG_0551.